The sequence spans 238 residues: Lipoprotein-releasing system ATP-binding protein LolD (238 aa).

The ABC transporter domain maps to 6–238 (LVCQGIRKVY…RSSLAQEMEA (233 aa)). 42 to 49 (GSSGSGKS) provides a ligand contact to ATP.

Belongs to the ABC transporter superfamily. Lipoprotein translocase (TC 3.A.1.125) family. The complex is composed of two ATP-binding proteins (LolD) and two transmembrane proteins (LolC and LolE).

It is found in the cell inner membrane. In terms of biological role, part of the ABC transporter complex LolCDE involved in the translocation of mature outer membrane-directed lipoproteins, from the inner membrane to the periplasmic chaperone, LolA. Responsible for the formation of the LolA-lipoprotein complex in an ATP-dependent manner. This is Lipoprotein-releasing system ATP-binding protein LolD from Aliivibrio fischeri (strain ATCC 700601 / ES114) (Vibrio fischeri).